The primary structure comprises 492 residues: GTPase Der (492 aa).

EngA-type G domains lie at 3 to 166 (PVVA…VDEV) and 205 to 378 (IKLA…DSAT). Residues 9 to 16 (GRPNVGKS), 56 to 60 (DTGGI), 118 to 121 (NKTD), 211 to 218 (GRPNVGKS), 258 to 262 (DTAGV), and 323 to 326 (NKWD) contribute to the GTP site. The 85-residue stretch at 379 to 463 (RRVSTAMLTR…PIRIQFKEGE (85 aa)) folds into the KH-like domain.

Belongs to the TRAFAC class TrmE-Era-EngA-EngB-Septin-like GTPase superfamily. EngA (Der) GTPase family. In terms of assembly, associates with the 50S ribosomal subunit.

In terms of biological role, GTPase that plays an essential role in the late steps of ribosome biogenesis. The chain is GTPase Der from Klebsiella pneumoniae subsp. pneumoniae (strain ATCC 700721 / MGH 78578).